The following is a 169-amino-acid chain: Probable phospholipid hydroperoxide glutathione peroxidase (169 aa).

Residue Cys-43 is part of the active site.

Belongs to the glutathione peroxidase family. As to quaternary structure, monomer. Has a tendency to form higher mass oligomers. Interacts with FUNDC1; this interaction promotes GPX4 recruitment into mitochondria through TOM/TIM complex where it is degraded by mitophagy.

Its subcellular location is the cytoplasm. It catalyses the reaction a hydroperoxy polyunsaturated fatty acid + 2 glutathione = a hydroxy polyunsaturated fatty acid + glutathione disulfide + H2O. In terms of biological role, protects cells and enzymes from oxidative damage, by catalyzing the reduction of hydrogen peroxide, lipid peroxides and organic hydroperoxide, by glutathione. In Solanum lycopersicum (Tomato), this protein is Probable phospholipid hydroperoxide glutathione peroxidase (GPXle-1).